Here is a 429-residue protein sequence, read N- to C-terminus: MLIAVAGMSHRSAPVEARERVAFAPCAARSFLRRLREEDGVPEAVLLSTCNRTELYVVAEAEPARDRLLGLLAEDRGVEPGSLYRDTYWHTDAEAVRHLYRVSASLDSMVVGEAQILGQVRDAYRMATEERCTGPVLNRLFHTALRVGKRVRAETGIGDSSLSVPHVAAKLAGEVFGSLEGRRALVLGAGEMSELLVRHLRDRGVAEIRIANRTRERAERLAALFGGRAADLGDLPRELARADIVVSSTGSGEWVIRGPEVAAALESREEPLFLIDIAVPRDVDPVVQSIEGAFLYDIDDLQAVVERNAEDRQEAAAAAEEMIGPAVVEFMSWLSTLHVAPLIKELRDGAERIRRHEVSRALRKMDLSPEQEEAVERMSRSIVNKLLHGPISEIKARAGAGDPLDSAEVRRRLLSLRGPGVELHPSREP.

Substrate-binding positions include 49–52 (TCNR), serine 108, 113–115 (EAQ), and glutamine 119. Cysteine 50 functions as the Nucleophile in the catalytic mechanism. 188–193 (GAGEMS) contacts NADP(+).

The protein belongs to the glutamyl-tRNA reductase family. As to quaternary structure, homodimer.

The catalysed reaction is (S)-4-amino-5-oxopentanoate + tRNA(Glu) + NADP(+) = L-glutamyl-tRNA(Glu) + NADPH + H(+). Its pathway is porphyrin-containing compound metabolism; protoporphyrin-IX biosynthesis; 5-aminolevulinate from L-glutamyl-tRNA(Glu): step 1/2. Its function is as follows. Catalyzes the NADPH-dependent reduction of glutamyl-tRNA(Glu) to glutamate 1-semialdehyde (GSA). This Rubrobacter xylanophilus (strain DSM 9941 / JCM 11954 / NBRC 16129 / PRD-1) protein is Glutamyl-tRNA reductase.